The sequence spans 337 residues: Undecaprenyl-phosphate 4-deoxy-4-formamido-L-arabinose transferase (337 aa).

Transmembrane regions (helical) follow at residues 235-255 (LSII…LLII) and 270-290 (FVLF…MGLL).

It belongs to the glycosyltransferase 2 family.

Its subcellular location is the cell inner membrane. The catalysed reaction is UDP-4-deoxy-4-formamido-beta-L-arabinose + di-trans,octa-cis-undecaprenyl phosphate = 4-deoxy-4-formamido-alpha-L-arabinopyranosyl di-trans,octa-cis-undecaprenyl phosphate + UDP. Its pathway is glycolipid biosynthesis; 4-amino-4-deoxy-alpha-L-arabinose undecaprenyl phosphate biosynthesis; 4-amino-4-deoxy-alpha-L-arabinose undecaprenyl phosphate from UDP-4-deoxy-4-formamido-beta-L-arabinose and undecaprenyl phosphate: step 1/2. It participates in bacterial outer membrane biogenesis; lipopolysaccharide biosynthesis. Its function is as follows. Catalyzes the transfer of 4-deoxy-4-formamido-L-arabinose from UDP to undecaprenyl phosphate. The modified arabinose is attached to lipid A and is required for resistance to polymyxin and cationic antimicrobial peptides. The protein is Undecaprenyl-phosphate 4-deoxy-4-formamido-L-arabinose transferase of Pseudomonas savastanoi pv. phaseolicola (strain 1448A / Race 6) (Pseudomonas syringae pv. phaseolicola (strain 1448A / Race 6)).